Consider the following 57-residue polypeptide: Potassium channel toxin alpha-KTx 1.5 (57 aa).

An N-terminal signal peptide occupies residues 1 to 20 (MKISFLLLALVICSIGWSEA). At Q21 the chain carries Pyrrolidone carboxylic acid. 3 disulfides stabilise this stretch: C27–C48, C33–C53, and C37–C55.

It belongs to the short scorpion toxin superfamily. Potassium channel inhibitor family. Alpha-KTx 01 subfamily. Expressed by the venom gland.

It localises to the secreted. Its function is as follows. Potent blocker of both large-conductance calcium-activated potassium channels (KCa1.1/KCNMA1) and voltage-gated potassium channels (Kv1.3/KCNA3). Has also been shown to moderately inhibit Kv1.2/KCNA2 and weakly inhibit Kv1.1/KCNA1 channels, as well as 5-hydroxytryptamine 3 receptors (HTR3A). The chain is Potassium channel toxin alpha-KTx 1.5 from Olivierus martensii (Manchurian scorpion).